Consider the following 91-residue polypeptide: uncharacterized protein (91 aa).

A signal peptide spans 1-18 (MKVNLILFSLFLLVSIMA). A lipid anchor (N-palmitoyl cysteine) is attached at Cys19. Cys19 carries S-diacylglycerol cysteine lipidation.

The protein resides in the cell membrane. This is an uncharacterized protein from Escherichia coli (strain K12).